Consider the following 265-residue polypeptide: Very long chain fatty acid elongase 6 (265 aa).

Asparagine 2 carries an N-linked (GlcNAc...) asparagine glycan. The next 7 helical transmembrane spans lie at 34–51 (FLFS…RHLM), 70–90 (LAVF…YILM), 111–131 (FWAY…IFII), 136–156 (KLIF…WYSY), 159–179 (MVAG…VMYS), 197–217 (FITL…YLVF), and 232–252 (IFWS…FFFE).

It belongs to the ELO family. ELOVL6 subfamily. In terms of processing, N-Glycosylated. As to expression, ubiquitous.

The protein resides in the endoplasmic reticulum membrane. It catalyses the reaction a very-long-chain acyl-CoA + malonyl-CoA + H(+) = a very-long-chain 3-oxoacyl-CoA + CO2 + CoA. The enzyme catalyses hexadecanoyl-CoA + malonyl-CoA + H(+) = 3-oxooctadecanoyl-CoA + CO2 + CoA. The catalysed reaction is (9Z)-hexadecenoyl-CoA + malonyl-CoA + H(+) = 3-oxo-(11Z)-octadecenoyl-CoA + CO2 + CoA. It carries out the reaction dodecanoyl-CoA + malonyl-CoA + H(+) = 3-oxotetradecanoyl-CoA + CO2 + CoA. It catalyses the reaction tetradecanoyl-CoA + malonyl-CoA + H(+) = 3-oxohexadecanoyl-CoA + CO2 + CoA. The enzyme catalyses (9Z)-octadecenoyl-CoA + malonyl-CoA + H(+) = 3-oxo-(11Z)-eicosenoyl-CoA + CO2 + CoA. The catalysed reaction is (9Z,12Z)-octadecadienoyl-CoA + malonyl-CoA + H(+) = (11Z,14Z)-3-oxoicosa-11,14-dienoyl-CoA + CO2 + CoA. It carries out the reaction (9Z,12Z,15Z)-octadecatrienoyl-CoA + malonyl-CoA + H(+) = (11Z,14Z,17Z)-3-oxoeicosatrienoyl-CoA + CO2 + CoA. Its pathway is lipid metabolism; fatty acid biosynthesis. Its activity is regulated as follows. The reaction is stimulated by the presence of HSD17B12, the enzyme catalyzing the second step of the elongation cycle. Its function is as follows. Catalyzes the first and rate-limiting reaction of the four reactions that constitute the long-chain fatty acids elongation cycle. This endoplasmic reticulum-bound enzymatic process allows the addition of 2 carbons to the chain of long- and very long-chain fatty acids (VLCFAs) per cycle. Condensing enzyme that elongates fatty acids with 12, 14 and 16 carbons with higher activity toward C16:0 acyl-CoAs. Catalyzes the synthesis of unsaturated C16 long chain fatty acids and, to a lesser extent, C18:0 and those with low desaturation degree. May participate in the production of saturated and monounsaturated VLCFAs of different chain lengths that are involved in multiple biological processes as precursors of membrane lipids and lipid mediators. The sequence is that of Very long chain fatty acid elongase 6 from Homo sapiens (Human).